We begin with the raw amino-acid sequence, 786 residues long: Constitutive coactivator of peroxisome proliferator-activated receptor gamma (786 aa).

The tract at residues 1 to 561 is mediates transactivation of PPARG; that stretch reads MGVRGLQGFV…GTPSLEVLWL (561 aa). Disordered stretches follow at residues 371–413 and 738–786; these read PNQE…KLPS and HWDS…WRRY. Over residues 750–771 the composition is skewed to polar residues; that stretch reads QGYSSYRTDSTHGHSGQSWRNQ.

It belongs to the constitutive coactivator of PPAR-gamma family. Interacts with ESR1 and RXRA. Interacts with PPARG; in a ligand-independent manner. As to expression, ubiquitously expressed (at protein level).

It is found in the nucleus. Functions as a transactivator of PPARG and ESR1. Functions in adipogenesis through PPARG activation. The polypeptide is Constitutive coactivator of peroxisome proliferator-activated receptor gamma (Fam120b) (Mus musculus (Mouse)).